Consider the following 215-residue polypeptide: Beta-crystallin A3-2 (215 aa).

Positions 1-30 (MEIPAIQTEREDITSEKMAQINPLPVPLGP) are N-terminal arm. 2 Beta/gamma crystallin 'Greek key' domains span residues 31-70 (WKIT…KVEC) and 71-117 (GAWI…RPIC). The interval 118–123 (SANHEE) is connecting peptide. Beta/gamma crystallin 'Greek key' domains are found at residues 124–165 (SKLV…KVQC) and 166–214 (GAWV…RRIQ).

Belongs to the beta/gamma-crystallin family. In terms of assembly, homo/heterodimer, or complexes of higher-order. The structure of beta-crystallin oligomers seems to be stabilized through interactions between the N-terminal arms. Post-translationally, the N-terminus is blocked.

Functionally, crystallins are the dominant structural components of the vertebrate eye lens. The polypeptide is Beta-crystallin A3-2 (Aquarana catesbeiana (American bullfrog)).